Consider the following 321-residue polypeptide: tRNA uridine(34) hydroxylase (321 aa).

The 95-residue stretch at 123 to 217 (SDPDVTVIDT…YLEEVPEGNS (95 aa)) folds into the Rhodanese domain. Cysteine 177 acts as the Cysteine persulfide intermediate in catalysis. The span at 294-308 (RKGELHIGDRADIAK) shows a compositional bias: basic and acidic residues. A disordered region spans residues 294–321 (RKGELHIGDRADIAKSRTTQGAPSADGE).

Belongs to the TrhO family.

The catalysed reaction is uridine(34) in tRNA + AH2 + O2 = 5-hydroxyuridine(34) in tRNA + A + H2O. In terms of biological role, catalyzes oxygen-dependent 5-hydroxyuridine (ho5U) modification at position 34 in tRNAs. The protein is tRNA uridine(34) hydroxylase of Teredinibacter turnerae (strain ATCC 39867 / T7901).